Reading from the N-terminus, the 475-residue chain is Argininosuccinate lyase (475 aa).

Belongs to the lyase 1 family. Argininosuccinate lyase subfamily.

It is found in the cytoplasm. It catalyses the reaction 2-(N(omega)-L-arginino)succinate = fumarate + L-arginine. The protein operates within amino-acid biosynthesis; L-arginine biosynthesis; L-arginine from L-ornithine and carbamoyl phosphate: step 3/3. The protein is Argininosuccinate lyase of Streptomyces coelicolor (strain ATCC BAA-471 / A3(2) / M145).